The primary structure comprises 318 residues: Olfactory receptor 2T34 (318 aa).

The Extracellular segment spans residues 1-30 (MCSGNQTSQNQTASTDFTLTGLFAESKHAA). N-linked (GlcNAc...) asparagine glycans are attached at residues N5 and N10. A helical transmembrane segment spans residues 31-54 (LLYTVTFLLFLMALTGNALLILLI). The Cytoplasmic segment spans residues 55–62 (HSEPRLHT). A helical membrane pass occupies residues 63 to 84 (PMYFFISQLALMDLMYLCVTVP). Residues 85–105 (KMLVGQVTGDDTISPSGCGIQ) lie on the Extracellular side of the membrane. A disulfide bridge links C102 with C194. Residues 106-125 (MFFHLTLAGAEVFLLAAMAY) form a helical membrane-spanning segment. Residues 126 to 144 (DRYAAVCRPLHYPLLMNQR) are Cytoplasmic-facing. Residues 145–163 (VCQLLVSACWVLGMVDGLL) form a helical membrane-spanning segment. Residues 164–200 (LTPITMSFPFCQSRKILSFFCETPALLKLSCSDVSLY) lie on the Extracellular side of the membrane. Residues 201 to 224 (KMLTYLCCILMLLTPIMVISSSYT) form a helical membrane-spanning segment. At 225 to 241 (LILHLIHRMNSAAGRRK) the chain is on the cytoplasmic side. The helical transmembrane segment at 242–264 (ALATCSSHMIIVLLLFGASFYTY) threads the bilayer. Over 265–277 (MLRSSYHTAEQDM) the chain is Extracellular. The helical transmembrane segment at 278–297 (MVSAFYTIFTPVLNPLIYSL) threads the bilayer. At 298 to 318 (RNKDVTRALRSMMQSRMNQEK) the chain is on the cytoplasmic side.

This sequence belongs to the G-protein coupled receptor 1 family.

It localises to the cell membrane. Odorant receptor. In Homo sapiens (Human), this protein is Olfactory receptor 2T34 (OR2T34).